Here is a 543-residue protein sequence, read N- to C-terminus: CTP synthase (543 aa).

Residues 1–265 (MTRFVFITGG…DTEVLRHFGL (265 aa)) form an amidoligase domain region. Residue Ser13 participates in CTP binding. Position 13 (Ser13) interacts with UTP. 14 to 19 (SLGKGI) contributes to the ATP binding site. Position 54 (Tyr54) interacts with L-glutamine. Asp71 contacts ATP. Mg(2+) is bound by residues Asp71 and Glu139. Residues 146–148 (DIE), 186–191 (KTKPTQ), and Lys222 contribute to the CTP site. Residues 186–191 (KTKPTQ) and Lys222 contribute to the UTP site. The 252-residue stretch at 291 to 542 (RIAVVGKYTA…VGAAVKKMRL (252 aa)) folds into the Glutamine amidotransferase type-1 domain. Position 354 (Gly354) interacts with L-glutamine. Residue Cys381 is the Nucleophile; for glutamine hydrolysis of the active site. L-glutamine contacts are provided by residues 382 to 385 (FGMQ), Glu405, and Arg470. Residues His515 and Glu517 contribute to the active site.

This sequence belongs to the CTP synthase family. Homotetramer.

The catalysed reaction is UTP + L-glutamine + ATP + H2O = CTP + L-glutamate + ADP + phosphate + 2 H(+). The enzyme catalyses L-glutamine + H2O = L-glutamate + NH4(+). It carries out the reaction UTP + NH4(+) + ATP = CTP + ADP + phosphate + 2 H(+). It participates in pyrimidine metabolism; CTP biosynthesis via de novo pathway; CTP from UDP: step 2/2. Its activity is regulated as follows. Allosterically activated by GTP, when glutamine is the substrate; GTP has no effect on the reaction when ammonia is the substrate. The allosteric effector GTP functions by stabilizing the protein conformation that binds the tetrahedral intermediate(s) formed during glutamine hydrolysis. Inhibited by the product CTP, via allosteric rather than competitive inhibition. Its function is as follows. Catalyzes the ATP-dependent amination of UTP to CTP with either L-glutamine or ammonia as the source of nitrogen. Regulates intracellular CTP levels through interactions with the four ribonucleotide triphosphates. The polypeptide is CTP synthase (Gluconacetobacter diazotrophicus (strain ATCC 49037 / DSM 5601 / CCUG 37298 / CIP 103539 / LMG 7603 / PAl5)).